The chain runs to 66 residues: Large ribosomal subunit protein bL35 (66 aa).

It belongs to the bacterial ribosomal protein bL35 family.

The protein is Large ribosomal subunit protein bL35 of Hyphomonas neptunium (strain ATCC 15444).